The sequence spans 181 residues: UPF0177 protein YbdI (181 aa).

A run of 5 helical transmembrane segments spans residues 10–30 (ILFL…GVFA), 41–61 (LLWL…AHYL), 81–101 (FVDS…IAPI), 114–134 (FFSH…LIHT), and 161–181 (SDSI…HIII).

This sequence belongs to the UPF0177 family.

The protein resides in the cell membrane. This is UPF0177 protein YbdI (ybdI) from Lactococcus lactis subsp. lactis (strain IL1403) (Streptococcus lactis).